A 1556-amino-acid polypeptide reads, in one-letter code: Pentafunctional AROM polypeptide (1556 aa).

The interval 1 to 387 is 3-dehydroquinate synthase; it reads MFAEGQIQKV…HEQKASSVAD (387 aa). Residues 46–48, 84–87, 115–117, and D120 contribute to the NAD(+) site; these read DTN, ETSK, and GGV. R131 is a binding site for 7-phospho-2-dehydro-3-deoxy-D-arabino-heptonate. Residue 140–141 coordinates NAD(+); that stretch reads TT. Residues D147 and K153 each coordinate 7-phospho-2-dehydro-3-deoxy-D-arabino-heptonate. K162 is a binding site for NAD(+). N163 is a 7-phospho-2-dehydro-3-deoxy-D-arabino-heptonate binding site. NAD(+) is bound by residues 180 to 183 and N191; that span reads FLET. Position 195 (E195) interacts with Zn(2+). 7-phospho-2-dehydro-3-deoxy-D-arabino-heptonate-binding positions include 195 to 198 and K253; that span reads EVIK. The Proton acceptor; for 3-dehydroquinate synthase activity role is filled by E263. 7-phospho-2-dehydro-3-deoxy-D-arabino-heptonate-binding positions include 267-271 and H274; that span reads RNLLN. H274 is a binding site for Zn(2+). The active-site Proton acceptor; for 3-dehydroquinate synthase activity is the H278. Residues H290 and K359 each coordinate 7-phospho-2-dehydro-3-deoxy-D-arabino-heptonate. H290 contributes to the Zn(2+) binding site. The tract at residues 400–837 is EPSP synthase; the sequence is VGEAPVGDKK…WDVLSGVFNV (438 aa). C819 serves as the catalytic For EPSP synthase activity. Residues 858–1049 form a shikimate kinase region; the sequence is PSIFIVGMRG…HKDQFTSFLS (192 aa). Residue 864–871 participates in ATP binding; it reads GMRGAGKT. Positions 1050–1266 are 3-dehydroquinase; the sequence is LTFPDVSIAA…AAPGQLSVEE (217 aa). H1171 acts as the Proton acceptor; for 3-dehydroquinate dehydratase activity in catalysis. The active-site Schiff-base intermediate with substrate; for 3-dehydroquinate dehydratase activity is the K1200. Positions 1279-1556 are shikimate dehydrogenase; the sequence is KNLSFFIVGT…EVGEKAVLGN (278 aa).

This sequence in the N-terminal section; belongs to the sugar phosphate cyclases superfamily. Dehydroquinate synthase family. The protein in the 2nd section; belongs to the EPSP synthase family. In the 3rd section; belongs to the shikimate kinase family. It in the 4th section; belongs to the type-I 3-dehydroquinase family. This sequence in the C-terminal section; belongs to the shikimate dehydrogenase family. As to quaternary structure, homodimer. Requires Zn(2+) as cofactor.

It is found in the cytoplasm. The enzyme catalyses 7-phospho-2-dehydro-3-deoxy-D-arabino-heptonate = 3-dehydroquinate + phosphate. It carries out the reaction 3-dehydroquinate = 3-dehydroshikimate + H2O. It catalyses the reaction shikimate + NADP(+) = 3-dehydroshikimate + NADPH + H(+). The catalysed reaction is shikimate + ATP = 3-phosphoshikimate + ADP + H(+). The enzyme catalyses 3-phosphoshikimate + phosphoenolpyruvate = 5-O-(1-carboxyvinyl)-3-phosphoshikimate + phosphate. It participates in metabolic intermediate biosynthesis; chorismate biosynthesis; chorismate from D-erythrose 4-phosphate and phosphoenolpyruvate: step 2/7. The protein operates within metabolic intermediate biosynthesis; chorismate biosynthesis; chorismate from D-erythrose 4-phosphate and phosphoenolpyruvate: step 3/7. It functions in the pathway metabolic intermediate biosynthesis; chorismate biosynthesis; chorismate from D-erythrose 4-phosphate and phosphoenolpyruvate: step 4/7. Its pathway is metabolic intermediate biosynthesis; chorismate biosynthesis; chorismate from D-erythrose 4-phosphate and phosphoenolpyruvate: step 5/7. It participates in metabolic intermediate biosynthesis; chorismate biosynthesis; chorismate from D-erythrose 4-phosphate and phosphoenolpyruvate: step 6/7. Functionally, the AROM polypeptide catalyzes 5 consecutive enzymatic reactions in prechorismate polyaromatic amino acid biosynthesis. This Yarrowia lipolytica (strain CLIB 122 / E 150) (Yeast) protein is Pentafunctional AROM polypeptide.